A 368-amino-acid polypeptide reads, in one-letter code: Phosphoserine aminotransferase (368 aa).

Residue Arg-44 coordinates L-glutamate. Pyridoxal 5'-phosphate contacts are provided by residues 78–79 (AT), Trp-104, Thr-157, Asp-179, and Gln-202. Lys-203 carries the N6-(pyridoxal phosphate)lysine modification. Residue 244 to 245 (NT) participates in pyridoxal 5'-phosphate binding.

This sequence belongs to the class-V pyridoxal-phosphate-dependent aminotransferase family. SerC subfamily. In terms of assembly, homodimer. The cofactor is pyridoxal 5'-phosphate.

It is found in the cytoplasm. The enzyme catalyses O-phospho-L-serine + 2-oxoglutarate = 3-phosphooxypyruvate + L-glutamate. It carries out the reaction 4-(phosphooxy)-L-threonine + 2-oxoglutarate = (R)-3-hydroxy-2-oxo-4-phosphooxybutanoate + L-glutamate. The protein operates within amino-acid biosynthesis; L-serine biosynthesis; L-serine from 3-phospho-D-glycerate: step 2/3. It participates in cofactor biosynthesis; pyridoxine 5'-phosphate biosynthesis; pyridoxine 5'-phosphate from D-erythrose 4-phosphate: step 3/5. Catalyzes the reversible conversion of 3-phosphohydroxypyruvate to phosphoserine and of 3-hydroxy-2-oxo-4-phosphonooxybutanoate to phosphohydroxythreonine. The chain is Phosphoserine aminotransferase from Neisseria meningitidis serogroup C / serotype 2a (strain ATCC 700532 / DSM 15464 / FAM18).